Here is a 496-residue protein sequence, read N- to C-terminus: Catalase isozyme 3 (496 aa).

Positions 1–25 (MTMDPTKFRPSSSHDTTVTTTNAGA) are disordered. Polar residues predominate over residues 9-23 (RPSSSHDTTVTTTNA). Active-site residues include histidine 67 and asparagine 140. Tyrosine 351 lines the heme pocket. The segment at 402 to 422 (PLRQAAPPTPLPPRPVAGRRE) is disordered.

Belongs to the catalase family. As to quaternary structure, homotetramer. Heme is required as a cofactor. As to expression, leaf mesophyll cells, pericarp, seedling roots and the coleoptile.

It is found in the mitochondrion. The enzyme catalyses 2 H2O2 = O2 + 2 H2O. Functionally, occurs in almost all aerobically respiring organisms and serves to protect cells from the toxic effects of hydrogen peroxide. Its levels are highest in the light period and are lowest in the dark period, hence it may be important for scavenging hydrogen peroxide at night, rather than during the day. The protein is Catalase isozyme 3 (CAT3) of Zea mays (Maize).